The primary structure comprises 89 residues: Small ribosomal subunit protein uS14A (89 aa).

Belongs to the universal ribosomal protein uS14 family. As to quaternary structure, part of the 30S ribosomal subunit. Contacts proteins S3 and S10.

In terms of biological role, binds 16S rRNA, required for the assembly of 30S particles and may also be responsible for determining the conformation of the 16S rRNA at the A site. This Staphylococcus saprophyticus subsp. saprophyticus (strain ATCC 15305 / DSM 20229 / NCIMB 8711 / NCTC 7292 / S-41) protein is Small ribosomal subunit protein uS14A.